The primary structure comprises 317 residues: Ornithine carbamoyltransferase (317 aa).

Carbamoyl phosphate-binding positions include 57–60 (STRT), Q84, R108, and 135–138 (HPCQ). Residues N166, D230, and 234-235 (SM) contribute to the L-ornithine site. Carbamoyl phosphate-binding positions include 270 to 271 (CL) and R298.

It belongs to the aspartate/ornithine carbamoyltransferase superfamily. OTCase family. Homododecamer.

It localises to the cytoplasm. It carries out the reaction carbamoyl phosphate + L-ornithine = L-citrulline + phosphate + H(+). It participates in amino-acid biosynthesis; L-arginine biosynthesis; L-arginine from L-ornithine and carbamoyl phosphate: step 1/3. In terms of biological role, reversibly catalyzes the transfer of the carbamoyl group from carbamoyl phosphate (CP) to the N(epsilon) atom of ornithine (ORN) to produce L-citrulline. The protein is Ornithine carbamoyltransferase of Pyrococcus horikoshii (strain ATCC 700860 / DSM 12428 / JCM 9974 / NBRC 100139 / OT-3).